Reading from the N-terminus, the 483-residue chain is Glutamyl-tRNA(Gln) amidotransferase subunit A (483 aa).

Residues K76 and S151 each act as charge relay system in the active site. S175 (acyl-ester intermediate) is an active-site residue.

Belongs to the amidase family. GatA subfamily. In terms of assembly, heterotrimer of A, B and C subunits.

It carries out the reaction L-glutamyl-tRNA(Gln) + L-glutamine + ATP + H2O = L-glutaminyl-tRNA(Gln) + L-glutamate + ADP + phosphate + H(+). Its function is as follows. Allows the formation of correctly charged Gln-tRNA(Gln) through the transamidation of misacylated Glu-tRNA(Gln) in organisms which lack glutaminyl-tRNA synthetase. The reaction takes place in the presence of glutamine and ATP through an activated gamma-phospho-Glu-tRNA(Gln). This Pseudomonas syringae pv. tomato (strain ATCC BAA-871 / DC3000) protein is Glutamyl-tRNA(Gln) amidotransferase subunit A.